The sequence spans 273 residues: Ribosomal RNA small subunit methyltransferase A (273 aa).

6 residues coordinate S-adenosyl-L-methionine: asparagine 18, leucine 20, glycine 45, glutamate 66, aspartate 91, and asparagine 113.

It belongs to the class I-like SAM-binding methyltransferase superfamily. rRNA adenine N(6)-methyltransferase family. RsmA subfamily.

It localises to the cytoplasm. It catalyses the reaction adenosine(1518)/adenosine(1519) in 16S rRNA + 4 S-adenosyl-L-methionine = N(6)-dimethyladenosine(1518)/N(6)-dimethyladenosine(1519) in 16S rRNA + 4 S-adenosyl-L-homocysteine + 4 H(+). Functionally, specifically dimethylates two adjacent adenosines (A1518 and A1519) in the loop of a conserved hairpin near the 3'-end of 16S rRNA in the 30S particle. May play a critical role in biogenesis of 30S subunits. The chain is Ribosomal RNA small subunit methyltransferase A from Klebsiella pneumoniae subsp. pneumoniae (strain ATCC 700721 / MGH 78578).